The following is a 464-amino-acid chain: Multifunctional dye peroxidase DyP2 (464 aa).

The active-site Proton acceptor is D203. The Mn(2+) site is built by E258, E273, and E284. A heme-binding site is contributed by H321.

The protein belongs to the DyP-type peroxidase family. As to quaternary structure, exists both as a monomeric and oligomeric species in solution; the monomeric form contains no bound heme cofactor and is inactive. Heme b serves as cofactor. Requires Mn(2+) as cofactor.

It is found in the secreted. The catalysed reaction is 1-(4-hydroxy-3-methoxyphenyl)-2-(2-methoxyphenoxy)propane-1,3-diol + H2O2 = guaiacol + vanillin + glycolaldehyde + H2O. It catalyses the reaction 2 Mn(2+) + H2O2 + 2 H(+) = 2 Mn(3+) + 2 H2O. The enzyme catalyses 2 a phenolic donor + H2O2 = 2 a phenolic radical donor + 2 H2O. It carries out the reaction Reactive Blue 5 + 2 H2O2 = 2,2'-disulfonyl azobenzene + 3-[(4-amino-6-chloro-1,3,5-triazin-2-yl)amino]benzenesulfonate + phthalate + 2 H2O + 2 H(+). Functionally, displays both high peroxidase and manganese peroxidase activity. Is likely involved in lignin degradation. Also has a Mn-dependent oxidase mode of action that expands its substrate scope in vitro; is thus able to catalyze the O(2)- and Mn-dependent oxidative decarboxylation of 4-methoxymandelate to anisaldehyde. In Amycolatopsis sp. (strain ATCC 39116 / 75iv2), this protein is Multifunctional dye peroxidase DyP2.